The sequence spans 430 residues: Cyclin-A2 (430 aa).

The residue at position 1 (Met-1) is an N-acetylmethionine. Disordered stretches follow at residues Met-1 to Asp-80 and Glu-106 to Ala-129. Ser-5 carries the phosphoserine modification. Over residues Glu-107 to Ser-120 the composition is skewed to basic and acidic residues.

Belongs to the cyclin family. Cyclin AB subfamily. As to quaternary structure, interacts with the CDK1 and CDK2 protein kinases to form serine/threonine kinase holoenzyme complexes. Interacts with CDK1 (hyperphosphorylated form in G1 and underphosphorylated forms in S and G2). Interacts with CDK2; the interaction increases from G1 to G2. Interacts (associated with CDK2 but not with CDK1) with SCAPER; regulates the activity of CCNA2/CDK2 by transiently maintaining CCNA2 in the cytoplasm. Forms a ternary complex with CDK2 and CDKN1B; CDKN1B inhibits the kinase activity of CDK2 through conformational rearrangements. Interacts with INCA1. Post-translationally, polyubiquitinated via 'Lys-11'-linked ubiquitin by the anaphase-promoting complex (APC/C), leading to its degradation by the proteasome. Deubiquitinated and stabilized by USP37 enables entry into S phase. Ubiquitinated during the G1 phase by the SCF(FBXO31) complex, leading to its proteasomal degradation.

Its subcellular location is the nucleus. It is found in the cytoplasm. In terms of biological role, cyclin which controls both the G1/S and the G2/M transition phases of the cell cycle. Functions through the formation of specific serine/threonine kinase holoenzyme complexes with the cyclin-dependent protein kinases CDK1 and CDK2. The cyclin subunit confers the substrate specificity of these complexes and differentially interacts with and activates CDK1 and CDK2 throughout the cell cycle. The protein is Cyclin-A2 of Bos taurus (Bovine).